The following is a 1523-amino-acid chain: WD repeat-containing protein 62 (1523 aa).

At alanine 2 the chain carries N-acetylalanine. Residue serine 33 is modified to Phosphoserine. Threonine 46 bears the Phosphothreonine mark. WD repeat units lie at residues 109–150, 153–194, 196–234, 291–330, 357–396, 411–450, 490–529, 532–574, 578–618, 626–665, 671–713, and 714–752; these read TTRK…QVAE, GHKY…VVAS, KVSCRVIALSFSEDSSYFVTVGNRHVRFWFLEASTEAKV, INLKVSLSSCLCVSDELIFCGCTDGIVRIFQAHSLLYLTN, AVYPDTVALTFDPVHQWLSCVYKDHSIYIWDVKDIDEVSK, EVYPEFEDQRACLPSGTFLTCSSDNTIRFWNLDSASDTRW, DMKAGVRVMQVSPDGQHLASGDRSGNLRIHELHFMDELIK, AHDA…NLEQ, DHSS…DGLH, AEKTTLYDMDIDITQKYVAVACQDRNVRVYNTVSGKQKKC, GDEG…KMFG, and HSEIVTGMKFTYDCRHLITVSGDSCVFIWHLGPEITTCM. Serine 501 is modified (phosphoserine). A disordered region spans residues 762–824; the sequence is QEQQQQPKDQ…PSKDSLDPDP (63 aa). Polar residues predominate over residues 776 to 790; sequence PPSQETYASTPSEIR. The segment covering 797 to 809 has biased composition (acidic residues); sequence QTEDEMEEECEPE. The WD 13 repeat unit spans residues 803–846; it reads EEECEPEELLKTPSKDSLDPDPRCLLTNGKLPLWAKRLLGDDDV. The segment covering 810–824 has biased composition (basic and acidic residues); it reads ELLKTPSKDSLDPDP. 2 positions are modified to phosphoserine: serine 966 and serine 972. The disordered stretch occupies residues 1000 to 1072; the sequence is VSSVSSKDQS…GLGNGSLPQT (73 aa). Threonine 1072 carries the post-translational modification Phosphothreonine. Serine 1117, serine 1143, and serine 1169 each carry phosphoserine. The segment at 1143 to 1258 is disordered; sequence SPEAQPVGQG…SLHKPLSPGQ (116 aa). Composition is skewed to polar residues over residues 1167–1177 and 1199–1213; these read YMSSDGTNVLS and TSVLTTGREQSISAP. Residues 1214–1225 are compositionally biased toward low complexity; the sequence is SSCSYLESTTSS. The span at 1226–1235 shows a compositional bias: polar residues; it reads HAKTTRSISL. Serine 1234 carries the post-translational modification Phosphoserine.

Can form homodimers (via C-terminus). Interacts (via C-terminus) with MAPKBP1 (via C-terminus). Interacts with CDK5RAP2, CEP152, CEP63 and KIAA0753. CEP63, CDK5RAP2, CEP152, WDR62 are proposed to form a stepwise assembled complex at the centrosome forming a ring near parental centrioles. As to expression, prominent in neural crest lineages from 9.5 dpc to 11.5 dpc. Also expressed in the ventricular and subventricular zones during the period of cerebral cortical neurogenesis (11.5-16.5 dpc), with expression decreasing in intensity by 17.5 dpc. In the cerebellum, it is strongly expressed in precursors of granule neurons at late embryonic and early postnatal stages; by postnatal day 9 (P9). Present in fetal brain, enriched within the ventricular and subventricular zone (at protein level).

The protein localises to the nucleus. The protein resides in the cytoplasm. It is found in the cytoskeleton. Its subcellular location is the spindle pole. It localises to the microtubule organizing center. The protein localises to the centrosome. The protein resides in the centriole. Functionally, required for cerebral cortical development. Plays a role in neuronal proliferation and migration. Plays a role in mother-centriole-dependent centriole duplication; the function seems also to involve CEP152, CDK5RAP2 and CEP63 through a stepwise assembled complex at the centrosome that recruits CDK2 required for centriole duplication. This chain is WD repeat-containing protein 62 (Wdr62), found in Mus musculus (Mouse).